Here is a 196-residue protein sequence, read N- to C-terminus: uncharacterized protein (196 aa).

Residues 20-40 form a helical membrane-spanning segment; sequence GALALGCIALLLMGIVGCTTV.

Its subcellular location is the membrane. This is an uncharacterized protein from Mycobacterium tuberculosis (strain CDC 1551 / Oshkosh).